The primary structure comprises 177 residues: Large ribosomal subunit protein uL6 (177 aa).

It belongs to the universal ribosomal protein uL6 family. Part of the 50S ribosomal subunit.

Functionally, this protein binds to the 23S rRNA, and is important in its secondary structure. It is located near the subunit interface in the base of the L7/L12 stalk, and near the tRNA binding site of the peptidyltransferase center. This chain is Large ribosomal subunit protein uL6, found in Neisseria meningitidis serogroup C (strain 053442).